The primary structure comprises 521 residues: Phosphoethanolamine transferase EptA (521 aa).

Transmembrane regions (helical) follow at residues alanine 18 to valine 38, phenylalanine 47 to glycine 67, isoleucine 79 to leucine 99, phenylalanine 118 to isoleucine 138, alanine 150 to threonine 170, and phenylalanine 182 to leucine 202.

This sequence belongs to the phosphoethanolamine transferase family. EptA subfamily.

It localises to the cell inner membrane. It functions in the pathway bacterial outer membrane biogenesis; LPS lipid A biosynthesis. Functionally, probably catalyzes the addition of a phosphoethanolamine moiety to the dephosphorylated 1-position of the disaccharide backbone of lipid A. Lipid A that is 1-phosphorylated is not a substrate for this enzyme. This chain is Phosphoethanolamine transferase EptA, found in Helicobacter pylori (strain ATCC 700392 / 26695) (Campylobacter pylori).